The primary structure comprises 279 residues: Pantothenate synthetase (279 aa).

26–33 (MGNLHDGH) serves as a coordination point for ATP. Catalysis depends on His33, which acts as the Proton donor. Position 57 (Gln57) interacts with (R)-pantoate. Residue Gln57 participates in beta-alanine binding. 144–147 (GKKD) is an ATP binding site. (R)-pantoate is bound at residue Gln150. ATP contacts are provided by residues Val173 and 181–184 (LSSR).

The protein belongs to the pantothenate synthetase family. As to quaternary structure, homodimer.

The protein localises to the cytoplasm. The catalysed reaction is (R)-pantoate + beta-alanine + ATP = (R)-pantothenate + AMP + diphosphate + H(+). It participates in cofactor biosynthesis; (R)-pantothenate biosynthesis; (R)-pantothenate from (R)-pantoate and beta-alanine: step 1/1. Catalyzes the condensation of pantoate with beta-alanine in an ATP-dependent reaction via a pantoyl-adenylate intermediate. The sequence is that of Pantothenate synthetase from Burkholderia mallei (strain NCTC 10229).